Here is a 218-residue protein sequence, read N- to C-terminus: N-(5'-phosphoribosyl)anthranilate isomerase (218 aa).

It belongs to the TrpF family.

The catalysed reaction is N-(5-phospho-beta-D-ribosyl)anthranilate = 1-(2-carboxyphenylamino)-1-deoxy-D-ribulose 5-phosphate. The protein operates within amino-acid biosynthesis; L-tryptophan biosynthesis; L-tryptophan from chorismate: step 3/5. In Bordetella bronchiseptica (strain ATCC BAA-588 / NCTC 13252 / RB50) (Alcaligenes bronchisepticus), this protein is N-(5'-phosphoribosyl)anthranilate isomerase.